A 449-amino-acid polypeptide reads, in one-letter code: Methylenetetrahydrofolate--tRNA-(uracil-5-)-methyltransferase TrmFO (449 aa).

9–14 (GGGIAG) is a binding site for FAD.

It belongs to the MnmG family. TrmFO subfamily. Requires FAD as cofactor.

It localises to the cytoplasm. It catalyses the reaction uridine(54) in tRNA + (6R)-5,10-methylene-5,6,7,8-tetrahydrofolate + NADH + H(+) = 5-methyluridine(54) in tRNA + (6S)-5,6,7,8-tetrahydrofolate + NAD(+). The catalysed reaction is uridine(54) in tRNA + (6R)-5,10-methylene-5,6,7,8-tetrahydrofolate + NADPH + H(+) = 5-methyluridine(54) in tRNA + (6S)-5,6,7,8-tetrahydrofolate + NADP(+). In terms of biological role, catalyzes the folate-dependent formation of 5-methyl-uridine at position 54 (M-5-U54) in all tRNAs. In Gloeobacter violaceus (strain ATCC 29082 / PCC 7421), this protein is Methylenetetrahydrofolate--tRNA-(uracil-5-)-methyltransferase TrmFO.